Here is a 254-residue protein sequence, read N- to C-terminus: Alcohol dehydrogenase (254 aa).

10-33 contributes to the NAD(+) binding site; sequence FVAGLGGIGFDTSREIVKSGPKNL. Ser-138 serves as a coordination point for substrate. Tyr-151 serves as the catalytic Proton acceptor.

It belongs to the short-chain dehydrogenases/reductases (SDR) family. Homodimer.

The catalysed reaction is a primary alcohol + NAD(+) = an aldehyde + NADH + H(+). It carries out the reaction a secondary alcohol + NAD(+) = a ketone + NADH + H(+). The polypeptide is Alcohol dehydrogenase (Adh) (Drosophila mayaguana (Fruit fly)).